An 864-amino-acid polypeptide reads, in one-letter code: DNA mismatch repair protein MutS (864 aa).

607-614 (GPNMGGKS) contacts ATP.

The protein belongs to the DNA mismatch repair MutS family.

In terms of biological role, this protein is involved in the repair of mismatches in DNA. It is possible that it carries out the mismatch recognition step. This protein has a weak ATPase activity. The chain is DNA mismatch repair protein MutS from Neisseria meningitidis serogroup C / serotype 2a (strain ATCC 700532 / DSM 15464 / FAM18).